Reading from the N-terminus, the 422-residue chain is Adenylosuccinate synthetase (422 aa).

Residues 12–18 (GDEGKGK) and 40–42 (GHT) contribute to the GTP site. The Proton acceptor role is filled by Asp13. Mg(2+)-binding residues include Asp13 and Gly40. Residues 13-16 (DEGK), 38-41 (NAGH), Thr129, Arg143, Asn221, Thr236, and Arg300 contribute to the IMP site. His41 functions as the Proton donor in the catalytic mechanism. 296-302 (VTTGRKR) provides a ligand contact to substrate. GTP is bound by residues Arg302, 328–330 (KLD), and 410–412 (GVG).

It belongs to the adenylosuccinate synthetase family. As to quaternary structure, homodimer. Mg(2+) is required as a cofactor.

The protein localises to the cytoplasm. The enzyme catalyses IMP + L-aspartate + GTP = N(6)-(1,2-dicarboxyethyl)-AMP + GDP + phosphate + 2 H(+). It functions in the pathway purine metabolism; AMP biosynthesis via de novo pathway; AMP from IMP: step 1/2. In terms of biological role, plays an important role in the de novo pathway and in the salvage pathway of purine nucleotide biosynthesis. Catalyzes the first committed step in the biosynthesis of AMP from IMP. This chain is Adenylosuccinate synthetase, found in Pyrenophora tritici-repentis (strain Pt-1C-BFP) (Wheat tan spot fungus).